Here is a 576-residue protein sequence, read N- to C-terminus: V-type ATP synthase alpha chain (576 aa).

238–245 provides a ligand contact to ATP; the sequence is GPFGAGKT.

Belongs to the ATPase alpha/beta chains family.

It catalyses the reaction ATP + H2O + 4 H(+)(in) = ADP + phosphate + 5 H(+)(out). Its function is as follows. Produces ATP from ADP in the presence of a proton gradient across the membrane. The V-type alpha chain is a catalytic subunit. This Borrelia duttonii (strain Ly) protein is V-type ATP synthase alpha chain.